Consider the following 421-residue polypeptide: ATP-dependent RNA helicase eIF4A (421 aa).

Residues 1–26 (MSNDKGLEEIPEDQSTTPHKPTSNVG) are disordered. Positions 13–26 (DQSTTPHKPTSNVG) are enriched in polar residues. Residues 48-76 (DSFDAMELKPELLRGVYAYGFERPSAIQQ) carry the Q motif motif. The region spanning 79-249 (IKPIIKGSDV…TKFMRDPVRI (171 aa)) is the Helicase ATP-binding domain. 92–99 (AQSGTGKT) is an ATP binding site. Positions 197–200 (DEAD) match the DEAD box motif. The region spanning 260–421 (GIKQFYIAVE…EMPMNVADLI (162 aa)) is the Helicase C-terminal domain.

Belongs to the DEAD box helicase family. eIF4A subfamily. As to quaternary structure, component of the eIF4F complex, which composition varies with external and internal environmental conditions. It is composed of at least eIF4A, eIF4E and eIF4G.

It is found in the cytoplasm. The enzyme catalyses ATP + H2O = ADP + phosphate + H(+). Its function is as follows. ATP-dependent RNA helicase which is a subunit of the eIF4F complex involved in cap recognition and is required for mRNA binding to ribosome. In the current model of translation initiation, eIF4A unwinds RNA secondary structures in the 5'-UTR of mRNAs which is necessary to allow efficient binding of the small ribosomal subunit, and subsequent scanning for the initiator codon. This Aspergillus oryzae (strain ATCC 42149 / RIB 40) (Yellow koji mold) protein is ATP-dependent RNA helicase eIF4A (tif1).